The sequence spans 245 residues: UDP-2,3-diacylglucosamine hydrolase (245 aa).

Mn(2+) is bound by residues D8, H10, D41, N79, and H114. 79–80 serves as a coordination point for substrate; it reads NR. Substrate-binding residues include D122, S160, N164, K167, and H195. Mn(2+)-binding residues include H195 and H197.

Belongs to the LpxH family. The cofactor is Mn(2+).

The protein localises to the cell inner membrane. The enzyme catalyses UDP-2-N,3-O-bis[(3R)-3-hydroxytetradecanoyl]-alpha-D-glucosamine + H2O = 2-N,3-O-bis[(3R)-3-hydroxytetradecanoyl]-alpha-D-glucosaminyl 1-phosphate + UMP + 2 H(+). The protein operates within glycolipid biosynthesis; lipid IV(A) biosynthesis; lipid IV(A) from (3R)-3-hydroxytetradecanoyl-[acyl-carrier-protein] and UDP-N-acetyl-alpha-D-glucosamine: step 4/6. Functionally, hydrolyzes the pyrophosphate bond of UDP-2,3-diacylglucosamine to yield 2,3-diacylglucosamine 1-phosphate (lipid X) and UMP by catalyzing the attack of water at the alpha-P atom. Involved in the biosynthesis of lipid A, a phosphorylated glycolipid that anchors the lipopolysaccharide to the outer membrane of the cell. The polypeptide is UDP-2,3-diacylglucosamine hydrolase (Photobacterium profundum (strain SS9)).